The following is a 537-amino-acid chain: Protein swallow (537 aa).

The segment at 344-406 is disordered; that stretch reads QPNAGKPKKN…SESSHPSSND (63 aa). Low complexity-rich tracts occupy residues 371 to 383 and 392 to 406; these read NGNG…HSSS and AAPN…SSND.

In terms of assembly, may be constituted of a homo- or heterodimer.

Its subcellular location is the nucleus. In terms of biological role, has a role in localizing bicoid mRNA at the anterior margin of the oocyte during oogenesis, and a poorly characterized role in nuclear divisions in early embryogenesis. This chain is Protein swallow (swa), found in Drosophila pseudoobscura pseudoobscura (Fruit fly).